A 175-amino-acid polypeptide reads, in one-letter code: Rubredoxin-1 (175 aa).

Rubredoxin-like domains lie at 1-53 (MARY…FVLI) and 119-170 (FLKW…YVLY). Positions 6, 9, 39, 42, 124, 127, 157, and 160 each coordinate Fe cation.

This sequence belongs to the rubredoxin family. Fe(3+) is required as a cofactor.

The protein localises to the cytoplasm. It participates in hydrocarbon metabolism; alkane degradation. Its function is as follows. Involved in the hydrocarbon hydroxylating system, which transfers electrons from NADH to rubredoxin reductase and then through rubredoxin to alkane 1 monooxygenase. This Pseudomonas putida (Arthrobacter siderocapsulatus) protein is Rubredoxin-1 (alkG).